The sequence spans 668 residues: DNA ligase (668 aa).

Residues 37–41, 86–87, and Glu-116 each bind NAD(+); these read DAIYD and SL. Catalysis depends on Lys-118, which acts as the N6-AMP-lysine intermediate. Positions 139, 176, 289, and 313 each coordinate NAD(+). The Zn(2+) site is built by Cys-407, Cys-410, Cys-425, and Cys-430. The region spanning 586-668 is the BRCT domain; it reads AQSSALAGLT…RALIETREMP (83 aa).

The protein belongs to the NAD-dependent DNA ligase family. LigA subfamily. The cofactor is Mg(2+). Mn(2+) is required as a cofactor.

It carries out the reaction NAD(+) + (deoxyribonucleotide)n-3'-hydroxyl + 5'-phospho-(deoxyribonucleotide)m = (deoxyribonucleotide)n+m + AMP + beta-nicotinamide D-nucleotide.. Functionally, DNA ligase that catalyzes the formation of phosphodiester linkages between 5'-phosphoryl and 3'-hydroxyl groups in double-stranded DNA using NAD as a coenzyme and as the energy source for the reaction. It is essential for DNA replication and repair of damaged DNA. The sequence is that of DNA ligase from Gloeobacter violaceus (strain ATCC 29082 / PCC 7421).